The primary structure comprises 539 residues: Eukaryotic translation initiation factor 3 subunit L (539 aa).

Residues 302 to 514 form the PCI domain; it reads TFSSILLYIQ…IHIADTKVSH (213 aa).

Belongs to the eIF-3 subunit L family. In terms of assembly, component of the eukaryotic translation initiation factor 3 (eIF-3) complex.

It localises to the cytoplasm. Its function is as follows. Component of the eukaryotic translation initiation factor 3 (eIF-3) complex, which is involved in protein synthesis of a specialized repertoire of mRNAs and, together with other initiation factors, stimulates binding of mRNA and methionyl-tRNAi to the 40S ribosome. The eIF-3 complex specifically targets and initiates translation of a subset of mRNAs involved in cell proliferation. The polypeptide is Eukaryotic translation initiation factor 3 subunit L (Anopheles gambiae (African malaria mosquito)).